Here is a 250-residue protein sequence, read N- to C-terminus: MAMSKIATLAGLLASAGLVAGHGYVTKMTIDGEEYGGWLADSYYYMDSPPDNYGWSTTVTDNGFVSPDAFGTDDITCHRGATPGALSAPVTAGSKIDITWNTWPESHKDNQGPIINYLAKCNGDCSSADKTSLEFVKIQAEAIVDASTNTWVTDELIENSFTTSVTIPASIAPGNYVLRHEIIALHSAGQQNGAQAYPQCLNLVVSGSGTDNPSGTPGTQLYSANDEGIVFDIYSNPTSYPMPGPELYSG.

The N-terminal stretch at 1 to 21 is a signal peptide; that stretch reads MAMSKIATLAGLLASAGLVAG. Histidine 22 contacts Cu(2+). Aspartate 51 is an O2 binding site. Disulfide bonds link cysteine 77–cysteine 200 and cysteine 121–cysteine 125. Histidine 107 provides a ligand contact to Cu(2+). Positions 186 and 195 each coordinate O2. Residue tyrosine 197 participates in Cu(2+) binding.

This sequence belongs to the glycosyl hydrolase 61 family. Cu(2+) is required as a cofactor.

The protein localises to the secreted. It carries out the reaction Endohydrolysis of (1-&gt;4)-beta-D-glucosidic linkages in cellulose, lichenin and cereal beta-D-glucans.. Its function is as follows. Lytic polysaccharide monooxygenase (LMPO) that depolymerizes crystalline and amorphous polysaccharides via the oxidation of scissile alpha- or beta-(1-4)-glycosidic bonds, yielding C1 or C4 oxidation products. Catalysis by LPMOs requires the reduction of the active-site copper from Cu(II) to Cu(I) by a reducing agent and H(2)O(2) or O(2) as a cosubstrate. Major secreted component of the extracellular cellulolytic system. This is AA9 family lytic polysaccharide monooxygenase F from Emericella nidulans (strain FGSC A4 / ATCC 38163 / CBS 112.46 / NRRL 194 / M139) (Aspergillus nidulans).